Reading from the N-terminus, the 352-residue chain is C-C chemokine receptor type 5 (352 aa).

Topologically, residues 1–30 are extracellular; it reads MDYQVSSPTYDIDYYTSEPCQKVNVKQIAA. A Sulfotyrosine modification is found at tyrosine 3. 2 O-linked (GalNAc...) serine glycosylation sites follow: serine 6 and serine 7. 3 positions are modified to sulfotyrosine: tyrosine 10, tyrosine 14, and tyrosine 15. 2 disulfide bridges follow: cysteine 20/cysteine 269 and cysteine 101/cysteine 178. The chain crosses the membrane as a helical span at residues 31 to 58; it reads RLLPPLYSLVFIFGFVGNILVVLILINC. The Cytoplasmic portion of the chain corresponds to 59–68; that stretch reads KRLKSMTDIY. The helical transmembrane segment at 69 to 89 threads the bilayer; sequence LLNLAISDLFFLLTVPFWAHY. Topologically, residues 90–102 are extracellular; that stretch reads AAAQWDFGNTMCQ. The chain crosses the membrane as a helical span at residues 103–124; the sequence is LLTGLYFIGFFSGIFFIILLTI. The Cytoplasmic portion of the chain corresponds to 125-141; sequence DRYLAIVHAVFALKART. Residues 142-166 traverse the membrane as a helical segment; that stretch reads VTFGVVTSVITWVVAVFASLPGIIF. Over 167-198 the chain is Extracellular; that stretch reads TRSQREGLHYTCSSHFPYSQYQFWKNFQTLKI. Residues 199-218 form a helical membrane-spanning segment; sequence VILGLVLPLLVMVICYSGIL. Residues 219–235 are Cytoplasmic-facing; sequence KTLLRCRNEKKRHRAVR. A helical membrane pass occupies residues 236 to 260; that stretch reads LIFTIMIVYFLFWAPYNIVLLLNTF. Topologically, residues 261 to 277 are extracellular; it reads QEFFGLNNCSSSNRLDQ. A helical membrane pass occupies residues 278–301; the sequence is AMQVTETLGMTHCCINPIIYAFVG. The Cytoplasmic segment spans residues 302–352; sequence EKFRNYLLVFFQKHIAKRFCKCCYIFQQEAPERASSVYTRSTGEQEISVGL. 3 S-palmitoyl cysteine lipidation sites follow: cysteine 321, cysteine 323, and cysteine 324. Phosphoserine; by BARK1 occurs at positions 336, 337, 342, and 349.

Belongs to the G-protein coupled receptor 1 family. Interacts with PRAF2. Efficient ligand binding to CCL3/MIP-1alpha and CCL4/MIP-1beta requires sulfation, O-glycosylation and sialic acid modifications. Glycosylation on Ser-6 is required for efficient binding of CCL4. Interacts with GRK2. Interacts with ARRB1 and ARRB2. Interacts with CNIH4. Interacts with S100A4; this interaction stimulates T-lymphocyte chemotaxis. Sulfated on at least 2 of the N-terminal tyrosines. Sulfation is required for efficient binding of the chemokines, CCL3 and CCL4. Post-translationally, palmitoylation in the C-terminal is important for cell surface expression. In terms of processing, phosphorylation on serine residues in the C-terminal is stimulated by binding CC chemokines especially by APO-RANTES. O-glycosylated, but not N-glycosylated. Ser-6 appears to be the major site even if Ser-7 may be also O-glycosylated. Also sialylated glycans present which contribute to chemokine binding. Thr-16 and Ser-17 may also be glycosylated and, if so, with small moieties such as a T-antigen.

The protein localises to the cell membrane. Its function is as follows. Receptor for a number of inflammatory CC-chemokines including CCL3/MIP-1-alpha, CCL4/MIP-1-beta and RANTES and subsequently transduces a signal by increasing the intracellular calcium ion level. May play a role in the control of granulocytic lineage proliferation or differentiation. Participates in T-lymphocyte migration to the infection site by acting as a chemotactic receptor. This Rhinopithecus bieti (Black snub-nosed monkey) protein is C-C chemokine receptor type 5 (CCR5).